The following is a 359-amino-acid chain: GTP 3',8-cyclase (359 aa).

In terms of domain architecture, Radical SAM core spans 33–260 (RFGRRHDSLR…PTGRENPSAP (228 aa)). Residue arginine 42 participates in GTP binding. [4Fe-4S] cluster contacts are provided by cysteine 49 and cysteine 53. Tyrosine 55 is a binding site for S-adenosyl-L-methionine. Residue cysteine 56 coordinates [4Fe-4S] cluster. GTP is bound at residue arginine 93. Glycine 97 is an S-adenosyl-L-methionine binding site. A GTP-binding site is contributed by threonine 124. Residue serine 148 participates in S-adenosyl-L-methionine binding. Lysine 185 contributes to the GTP binding site. An S-adenosyl-L-methionine-binding site is contributed by methionine 219. Residues cysteine 286 and cysteine 289 each contribute to the [4Fe-4S] cluster site. 291–293 (RLR) provides a ligand contact to GTP. A [4Fe-4S] cluster-binding site is contributed by cysteine 303.

Belongs to the radical SAM superfamily. MoaA family. In terms of assembly, monomer and homodimer. [4Fe-4S] cluster serves as cofactor.

It carries out the reaction GTP + AH2 + S-adenosyl-L-methionine = (8S)-3',8-cyclo-7,8-dihydroguanosine 5'-triphosphate + 5'-deoxyadenosine + L-methionine + A + H(+). It participates in cofactor biosynthesis; molybdopterin biosynthesis. Its function is as follows. Catalyzes the cyclization of GTP to (8S)-3',8-cyclo-7,8-dihydroguanosine 5'-triphosphate. This chain is GTP 3',8-cyclase, found in Rhodopirellula baltica (strain DSM 10527 / NCIMB 13988 / SH1).